The chain runs to 237 residues: Ribonuclease PH (237 aa).

Phosphate-binding positions include arginine 86 and 124–126 (GTR).

Belongs to the RNase PH family. In terms of assembly, homohexameric ring arranged as a trimer of dimers.

It catalyses the reaction tRNA(n+1) + phosphate = tRNA(n) + a ribonucleoside 5'-diphosphate. In terms of biological role, phosphorolytic 3'-5' exoribonuclease that plays an important role in tRNA 3'-end maturation. Removes nucleotide residues following the 3'-CCA terminus of tRNAs; can also add nucleotides to the ends of RNA molecules by using nucleoside diphosphates as substrates, but this may not be physiologically important. Probably plays a role in initiation of 16S rRNA degradation (leading to ribosome degradation) during starvation. The chain is Ribonuclease PH from Rhodopseudomonas palustris (strain ATCC BAA-98 / CGA009).